Consider the following 390-residue polypeptide: UPF0229 protein OB2647 (390 aa).

The tract at residues 99 to 121 (NASQQGQQGQGNGKKAGDQPGTD) is disordered.

It belongs to the UPF0229 family.

In Oceanobacillus iheyensis (strain DSM 14371 / CIP 107618 / JCM 11309 / KCTC 3954 / HTE831), this protein is UPF0229 protein OB2647.